Consider the following 281-residue polypeptide: Insecticidal crystal toxin protein (281 aa).

9 antigenic epitope regions span residues Asn-54–Phe-78, Ile-91–Ala-104, Gly-108–Gly-116, Phe-131–Ile-148, Ala-160–Leu-172, Lys-189–Leu-196, Gln-208–Arg-216, Thr-221–Thr-236, and Lys-247–Asn-256.

Belongs to the delta endotoxin family.

In terms of biological role, promotes colloidosmotic lysis by binding to the midgut epithelial cells of insects. Active against Mamestra brassicae. This chain is Insecticidal crystal toxin protein, found in Bacillus thuringiensis subsp. kurstaki.